The chain runs to 253 residues: TCF3 fusion partner (253 aa).

Disordered regions lie at residues 49-72 and 142-211; these read SGGLGGSGLRERDEEEEAARGRRR and DEGS…PELA. Ser167 bears the Phosphoserine mark. Pro residues predominate over residues 170 to 181; it reads RRTPAPPEPGSP. Position 172 is a phosphothreonine (Thr172). Phosphoserine is present on residues Ser180 and Ser188. Thr207 is subject to Phosphothreonine. Residue Lys216 forms a Glycyl lysine isopeptide (Lys-Gly) (interchain with G-Cter in SUMO2) linkage. Residues 234-253 form a disordered region; the sequence is VSRGPDKLLPYPTLASPASD. A phosphoserine mark is found at Ser249 and Ser252.

Interacts with NOL3; translocates NOL3 into the nucleus and negatively regulated TFPT-induced cell death. Component of the chromatin remodeling INO80 complex; specifically part of a complex module associated with the N-terminus of INO80.

It localises to the nucleus. Its function is as follows. Appears to promote apoptosis in a p53/TP53-independent manner. In terms of biological role, putative regulatory component of the chromatin remodeling INO80 complex which is involved in transcriptional regulation, DNA replication and probably DNA repair. The sequence is that of TCF3 fusion partner (TFPT) from Homo sapiens (Human).